The following is a 160-amino-acid chain: Large ribosomal subunit protein uL16 (160 aa).

The protein belongs to the universal ribosomal protein uL16 family. Part of the 50S ribosomal subunit.

In terms of biological role, binds 23S rRNA and is also seen to make contacts with the A and possibly P site tRNAs. This chain is Large ribosomal subunit protein uL16, found in Prochlorococcus marinus (strain MIT 9301).